A 1367-amino-acid chain; its full sequence is DNA polymerase III PolC-type (1367 aa).

The Exonuclease domain maps to 358-513 (FVVLDFETTG…DDARVTAQVF (156 aa)).

Belongs to the DNA polymerase type-C family. PolC subfamily.

It is found in the cytoplasm. It carries out the reaction DNA(n) + a 2'-deoxyribonucleoside 5'-triphosphate = DNA(n+1) + diphosphate. In terms of biological role, required for replicative DNA synthesis. This DNA polymerase also exhibits 3' to 5' exonuclease activity. The protein is DNA polymerase III PolC-type of Thermotoga maritima (strain ATCC 43589 / DSM 3109 / JCM 10099 / NBRC 100826 / MSB8).